A 535-amino-acid polypeptide reads, in one-letter code: T-complex protein 1 subunit zeta 1 (535 aa).

It belongs to the TCP-1 chaperonin family. Heterooligomeric complex of about 850 to 900 kDa that forms two stacked rings, 12 to 16 nm in diameter.

The protein localises to the cytoplasm. In terms of biological role, molecular chaperone; assists the folding of proteins upon ATP hydrolysis. Known to play a role, in vitro, in the folding of actin and tubulin. In Arabidopsis thaliana (Mouse-ear cress), this protein is T-complex protein 1 subunit zeta 1.